A 404-amino-acid chain; its full sequence is Multidrug resistance protein MdtG (404 aa).

11 consecutive transmembrane segments (helical) span residues 19–39 (LGCF…PLYV), 56–76 (LVFS…GGLA), 90–110 (LGMA…QFLI), 113–133 (ALLG…ATQV), 144–164 (TLST…GLLA), 171–191 (PVFF…FFFI), 222–242 (LFVT…ILTL), 254–274 (IAFI…LSAP), 288–308 (ILIV…FVQT), 317–337 (FLLG…LVYN), and 376–396 (AVFC…WNSL).

The protein belongs to the major facilitator superfamily. DHA1 family. MdtG (TC 2.A.1.2.20) subfamily.

The protein localises to the cell inner membrane. In Salmonella typhi, this protein is Multidrug resistance protein MdtG.